The sequence spans 160 residues: 2-C-methyl-D-erythritol 2,4-cyclodiphosphate synthase (160 aa).

A divalent metal cation is bound by residues aspartate 11 and histidine 13. 4-CDP-2-C-methyl-D-erythritol 2-phosphate contacts are provided by residues 11 to 13 and 37 to 38; these read DVH and HS. Histidine 45 is a binding site for a divalent metal cation. 4-CDP-2-C-methyl-D-erythritol 2-phosphate is bound by residues 59-61 and arginine 145; that span reads DIG.

Belongs to the IspF family. In terms of assembly, homotrimer. It depends on a divalent metal cation as a cofactor.

The catalysed reaction is 4-CDP-2-C-methyl-D-erythritol 2-phosphate = 2-C-methyl-D-erythritol 2,4-cyclic diphosphate + CMP. The protein operates within isoprenoid biosynthesis; isopentenyl diphosphate biosynthesis via DXP pathway; isopentenyl diphosphate from 1-deoxy-D-xylulose 5-phosphate: step 4/6. Its function is as follows. Involved in the biosynthesis of isopentenyl diphosphate (IPP) and dimethylallyl diphosphate (DMAPP), two major building blocks of isoprenoid compounds. Catalyzes the conversion of 4-diphosphocytidyl-2-C-methyl-D-erythritol 2-phosphate (CDP-ME2P) to 2-C-methyl-D-erythritol 2,4-cyclodiphosphate (ME-CPP) with a corresponding release of cytidine 5-monophosphate (CMP). The chain is 2-C-methyl-D-erythritol 2,4-cyclodiphosphate synthase from Neisseria meningitidis serogroup B (strain ATCC BAA-335 / MC58).